We begin with the raw amino-acid sequence, 204 residues long: ATP phosphoribosyltransferase (204 aa).

This sequence belongs to the ATP phosphoribosyltransferase family. Short subfamily. In terms of assembly, heteromultimer composed of HisG and HisZ subunits.

It is found in the cytoplasm. The enzyme catalyses 1-(5-phospho-beta-D-ribosyl)-ATP + diphosphate = 5-phospho-alpha-D-ribose 1-diphosphate + ATP. The protein operates within amino-acid biosynthesis; L-histidine biosynthesis; L-histidine from 5-phospho-alpha-D-ribose 1-diphosphate: step 1/9. Catalyzes the condensation of ATP and 5-phosphoribose 1-diphosphate to form N'-(5'-phosphoribosyl)-ATP (PR-ATP). Has a crucial role in the pathway because the rate of histidine biosynthesis seems to be controlled primarily by regulation of HisG enzymatic activity. The sequence is that of ATP phosphoribosyltransferase from Hydrogenobaculum sp. (strain Y04AAS1).